Reading from the N-terminus, the 264-residue chain is MKKLKLHGFNNLTKSLSFCIYDICYAKTAEERDGYIAYIDELYNANRLTEILSETCSIIGANILNIARQDYEPQGASVTILVSEEPIDPKLIDQTEHPGPLPETVVAHLDKSHICVHTYPESHPEGGLCTFRADIEVSTCGVISPLKALNYLIHQLESDIVTIDYRVRGFTRDVNGMKHFIDHEINSIQNFMSEDMKSLYDMVDVNVYQENIFHTKMLLKEFDLKHYMFHTKPEDLTETERQEITAALWKEMREIYYGRNISAV.

The active-site Schiff-base intermediate with substrate; via pyruvic acid is Ser112. Residue Ser112 is modified to Pyruvic acid (Ser); by autocatalysis. The active-site Proton acceptor; for processing activity is the His117. Residue Cys140 is the Proton donor; for catalytic activity of the active site.

The protein belongs to the prokaryotic AdoMetDC family. Type 2 subfamily. As to quaternary structure, heterooctamer of four alpha and four beta chains arranged as a tetramer of alpha/beta heterodimers. Pyruvate is required as a cofactor. Is synthesized initially as an inactive proenzyme. Formation of the active enzyme involves a self-maturation process in which the active site pyruvoyl group is generated from an internal serine residue via an autocatalytic post-translational modification. Two non-identical subunits are generated from the proenzyme in this reaction, and the pyruvate is formed at the N-terminus of the alpha chain, which is derived from the carboxyl end of the proenzyme. The post-translation cleavage follows an unusual pathway, termed non-hydrolytic serinolysis, in which the side chain hydroxyl group of the serine supplies its oxygen atom to form the C-terminus of the beta chain, while the remainder of the serine residue undergoes an oxidative deamination to produce ammonia and the pyruvoyl group blocking the N-terminus of the alpha chain.

The catalysed reaction is S-adenosyl-L-methionine + H(+) = S-adenosyl 3-(methylsulfanyl)propylamine + CO2. Its pathway is amine and polyamine biosynthesis; S-adenosylmethioninamine biosynthesis; S-adenosylmethioninamine from S-adenosyl-L-methionine: step 1/1. Its function is as follows. Catalyzes the decarboxylation of S-adenosylmethionine to S-adenosylmethioninamine (dcAdoMet), the propylamine donor required for the synthesis of the polyamines spermine and spermidine from the diamine putrescine. The protein is S-adenosylmethionine decarboxylase proenzyme of Salmonella agona (strain SL483).